Reading from the N-terminus, the 207-residue chain is Large ribosomal subunit protein uL4 (207 aa).

The segment at 49–78 (HAVKNRSAVSGGGRKPWRQKGTGRARQGSI) is disordered.

It belongs to the universal ribosomal protein uL4 family. Part of the 50S ribosomal subunit.

Its function is as follows. One of the primary rRNA binding proteins, this protein initially binds near the 5'-end of the 23S rRNA. It is important during the early stages of 50S assembly. It makes multiple contacts with different domains of the 23S rRNA in the assembled 50S subunit and ribosome. In terms of biological role, forms part of the polypeptide exit tunnel. This Streptococcus thermophilus (strain CNRZ 1066) protein is Large ribosomal subunit protein uL4.